The chain runs to 226 residues: Sugar fermentation stimulation protein homolog (226 aa).

This sequence belongs to the SfsA family.

The protein is Sugar fermentation stimulation protein homolog of Picrophilus torridus (strain ATCC 700027 / DSM 9790 / JCM 10055 / NBRC 100828 / KAW 2/3).